Consider the following 918-residue polypeptide: Chaperone protein ClpC4, chloroplastic (918 aa).

The segment at 266–515 is i; that stretch reads LMEYGTNLTK…RLRNAQCKPS (250 aa). ATP-binding positions include 311-318 and 653-660; these read GEPGVGKT and GPTGVGKS. The tract at residues 579-774 is II; it reads VTEDDVRHAI…LIVMTTNIGS (196 aa).

It belongs to the ClpA/ClpB family. ClpC subfamily.

The protein localises to the plastid. The protein resides in the chloroplast. In terms of biological role, molecular chaperone that may interact with a ClpP-like protease involved in degradation of denatured proteins in the chloroplast. The chain is Chaperone protein ClpC4, chloroplastic (CPLC4) from Oryza sativa subsp. japonica (Rice).